Reading from the N-terminus, the 98-residue chain is Large ribosomal subunit protein bL27 (98 aa).

Residues 1–9 (MLKMNLQLF) constitute a propeptide that is removed on maturation.

The protein belongs to the bacterial ribosomal protein bL27 family. In terms of processing, the N-terminus is cleaved by ribosomal processing cysteine protease Prp.

The protein is Large ribosomal subunit protein bL27 of Desulfitobacterium hafniense (strain DSM 10664 / DCB-2).